The primary structure comprises 406 residues: MLRIVPPKEIQGEVIAPPSKSYTHRGYFLSLLADEKSIVERPLISDDTLATIDAIRAFGADLIEEVVYPPEELRPNYIFARDSGTTARISIIVSSLAKGVSVIDGREQLRRRPMEDGVSSLRMIGVEAIGKRLPVKVFGRGRISAKEVSIVAEKSSQFATGFLILAAKIGLKVEIVKPVSKPYIEMTLKTMEEFGVKYDKAQENERLVIFVDPGVKGTKFKVPGDYSSAANFLVAGALYGKIRVRNLMRDDVQADKEILNILREYGAKVKVKDEYVEVESNERNPLNVDCSNFPDLFPLLAVLAAYAEGKSVIRGRQLRIKESDRIHAMAVNLSRAGIRVRELSDGLEIWGGQPKGFRGKTFNDHRITMALAILALGAKGESIIPETKSIAKSYPNFFEDLMRVIK.

3-phosphoshikimate contacts are provided by Lys-20, Ser-21, and Arg-25. Lys-20 is a phosphoenolpyruvate binding site. Gly-84 and Arg-112 together coordinate phosphoenolpyruvate. 6 residues coordinate 3-phosphoshikimate: Ser-155, Ser-156, Gln-157, Asp-295, Gln-317, and Lys-321. Gln-157 lines the phosphoenolpyruvate pocket. The Proton acceptor role is filled by Asp-295. Phosphoenolpyruvate contacts are provided by Arg-325, Arg-366, and Lys-392.

The protein belongs to the EPSP synthase family. In terms of assembly, monomer.

It localises to the cytoplasm. It catalyses the reaction 3-phosphoshikimate + phosphoenolpyruvate = 5-O-(1-carboxyvinyl)-3-phosphoshikimate + phosphate. The protein operates within metabolic intermediate biosynthesis; chorismate biosynthesis. In terms of biological role, catalyzes the transfer of the enolpyruvyl moiety of phosphoenolpyruvate (PEP) to the 5-hydroxyl of shikimate-3-phosphate (S3P) to produce enolpyruvyl shikimate-3-phosphate and inorganic phosphate. The sequence is that of 3-phosphoshikimate 1-carboxyvinyltransferase from Pyrococcus furiosus (strain ATCC 43587 / DSM 3638 / JCM 8422 / Vc1).